The primary structure comprises 459 residues: Fibrous sheath-interacting protein 1 (459 aa).

The tract at residues 1–54 (MDITKGSLDEIARPASSSRSRPGSRVSTSLSTEKPKRSSTSLSLEILNPEPGFS) is disordered. Positions 13–29 (RPASSSRSRPGSRVSTS) are enriched in low complexity. Positions 162–202 (KMERAIKRMQALDDILQRKLAKEKEVKAQGLEIRIKLWEEL) form a coiled coil. Residues 252–289 (QLPNEDPVEDDDHKTLQGNMTGADSSDRSDCKTRHSKG) are disordered. A compositionally biased stretch (basic and acidic residues) spans 276–289 (SSDRSDCKTRHSKG).

The protein belongs to the FSIP1 family.

The chain is Fibrous sheath-interacting protein 1 (fsip1) from Xenopus laevis (African clawed frog).